The chain runs to 400 residues: Argininosuccinate synthase (400 aa).

Residues 9 to 17 and Ala-37 contribute to the ATP site; that span reads AYSGGVDTS. Tyr-88 provides a ligand contact to L-citrulline. Gly-118 lines the ATP pocket. L-aspartate is bound by residues Thr-120, Asn-124, and Asp-125. Asn-124 is an L-citrulline binding site. L-citrulline-binding residues include Arg-128, Ser-176, Ser-185, Glu-261, and Tyr-273.

The protein belongs to the argininosuccinate synthase family. Type 1 subfamily. In terms of assembly, homotetramer.

The protein resides in the cytoplasm. The enzyme catalyses L-citrulline + L-aspartate + ATP = 2-(N(omega)-L-arginino)succinate + AMP + diphosphate + H(+). It participates in amino-acid biosynthesis; L-arginine biosynthesis; L-arginine from L-ornithine and carbamoyl phosphate: step 2/3. This Prochlorococcus marinus (strain MIT 9211) protein is Argininosuccinate synthase.